Consider the following 359-residue polypeptide: Phospho-N-acetylmuramoyl-pentapeptide-transferase (359 aa).

The next 10 membrane-spanning stretches (helical) occupy residues 26-46 (TIYA…WLIR), 75-95 (GGVL…NLTI), 97-117 (YVWL…ADDY), 134-154 (LACE…KPGF), 166-186 (VLPD…VGAA), 197-217 (GLAI…AYFA), 233-253 (GVGE…GFLW), 261-281 (VFMG…LAIV), 286-306 (ILLA…IFQV), and 336-356 (KVIV…ISTL).

Belongs to the glycosyltransferase 4 family. MraY subfamily. It depends on Mg(2+) as a cofactor.

The protein localises to the cell inner membrane. The enzyme catalyses UDP-N-acetyl-alpha-D-muramoyl-L-alanyl-gamma-D-glutamyl-meso-2,6-diaminopimeloyl-D-alanyl-D-alanine + di-trans,octa-cis-undecaprenyl phosphate = di-trans,octa-cis-undecaprenyl diphospho-N-acetyl-alpha-D-muramoyl-L-alanyl-D-glutamyl-meso-2,6-diaminopimeloyl-D-alanyl-D-alanine + UMP. It functions in the pathway cell wall biogenesis; peptidoglycan biosynthesis. Its function is as follows. Catalyzes the initial step of the lipid cycle reactions in the biosynthesis of the cell wall peptidoglycan: transfers peptidoglycan precursor phospho-MurNAc-pentapeptide from UDP-MurNAc-pentapeptide onto the lipid carrier undecaprenyl phosphate, yielding undecaprenyl-pyrophosphoryl-MurNAc-pentapeptide, known as lipid I. This is Phospho-N-acetylmuramoyl-pentapeptide-transferase from Syntrophus aciditrophicus (strain SB).